Here is a 277-residue protein sequence, read N- to C-terminus: Hematopoietically-expressed homeobox protein HHEX (277 aa).

Disordered stretches follow at residues 47–69 (AAPA…NSSF) and 199–277 (WRRL…SATR). The segment covering 52–63 (HSLPAPPPPTLP) has biased composition (pro residues). A DNA-binding region (homeobox) is located at residues 144 to 203 (RKGGQVRFSNEQTIELEKKFETQKYLSPPERKRLAKLLQLSERQVKTWFQNRRAKWRRLK). Residues 210 to 226 (TKKEEAEGTGDHGDPRS) show a composition bias toward basic and acidic residues. A compositionally biased stretch (acidic residues) spans 250–266 (EDPESDVSDDSDQEVDI).

In terms of tissue distribution, in all hematopoietic tissues except peripheral blood erythrocytes and in the liver and lung.

The protein localises to the nucleus. Functionally, recognizes the DNA sequence 5'-ATTAA-3'. Transcriptional repressor. May play a role in hematopoietic differentiation. The sequence is that of Hematopoietically-expressed homeobox protein HHEX (HHEX) from Gallus gallus (Chicken).